A 503-amino-acid polypeptide reads, in one-letter code: Excitatory amino acid transporter (503 aa).

The Cytoplasmic portion of the chain corresponds to 1–18 (MPPDTRINKEIMVSWIRK). Helical transmembrane passes span 19-39 (NLLL…GFLL), 59-79 (LMHM…ISGL), and 96-116 (TYYM…VLVI). The Extracellular segment spans residues 117–198 (HPGDPTIKKE…SLDYVKASVE (82 aa)). N-linked (GlcNAc...) asparagine glycans are attached at residues N177 and N187. Transmembrane regions (helical) follow at residues 199–219 (YTSG…GISL), 239–259 (VIMK…FCLI), 281–301 (VTVL…IFFV), 369–389 (AVAA…GQVV), and 400–420 (IGAA…LTAV).

Belongs to the dicarboxylate/amino acid:cation symporter (DAACS) (TC 2.A.23) family.

The protein resides in the membrane. Transports L-glutamate and also L- and D-aspartate. Essential for terminating the postsynaptic action of glutamate by rapidly removing released glutamate from the synaptic cleft. Acts as a symport by cotransporting sodium. This is Excitatory amino acid transporter (glt-1) from Caenorhabditis elegans.